The primary structure comprises 83 residues: Small ribosomal subunit protein bS16 (83 aa).

Belongs to the bacterial ribosomal protein bS16 family.

This is Small ribosomal subunit protein bS16 from Shewanella woodyi (strain ATCC 51908 / MS32).